Consider the following 35-residue polypeptide: Photosystem II reaction center protein T (35 aa).

Residues 3 to 23 traverse the membrane as a helical segment; that stretch reads ALVYTFLLVSTLGIIFFAIFF.

This sequence belongs to the PsbT family. PSII is composed of 1 copy each of membrane proteins PsbA, PsbB, PsbC, PsbD, PsbE, PsbF, PsbH, PsbI, PsbJ, PsbK, PsbL, PsbM, PsbT, PsbY, PsbZ, Psb30/Ycf12, at least 3 peripheral proteins of the oxygen-evolving complex and a large number of cofactors. It forms dimeric complexes.

It localises to the plastid. It is found in the chloroplast thylakoid membrane. Found at the monomer-monomer interface of the photosystem II (PS II) dimer, plays a role in assembly and dimerization of PSII. PSII is a light-driven water plastoquinone oxidoreductase, using light energy to abstract electrons from H(2)O, generating a proton gradient subsequently used for ATP formation. This Saururus cernuus (Lizard's tail) protein is Photosystem II reaction center protein T.